A 178-amino-acid polypeptide reads, in one-letter code: Ribosome maturation factor RimP (178 aa).

It belongs to the RimP family.

The protein resides in the cytoplasm. Functionally, required for maturation of 30S ribosomal subunits. The chain is Ribosome maturation factor RimP from Streptococcus pyogenes serotype M18 (strain MGAS8232).